Consider the following 288-residue polypeptide: Probable prolyl 4-hydroxylase 9 (288 aa).

Residues 1 to 12 are Cytoplasmic-facing; sequence MKSRLKSYRRKK. The chain crosses the membrane as a helical; Signal-anchor for type II membrane protein span at residues 13 to 33; it reads LGLATVIVFCSLCFLFGFYGS. Over 34-288 the chain is Lumenal; that stretch reads TLLSQNVPRV…KWIRDQDQEE (255 aa). The region spanning 164-283 is the Fe2OG dioxygenase domain; it reads HGESFNILRY…KWVATKWIRD (120 aa). Positions 182 and 184 each coordinate Fe cation. 2 N-linked (GlcNAc...) asparagine glycosylation sites follow: N221 and N255. Fe cation is bound at residue H264. K274 lines the 2-oxoglutarate pocket.

The protein belongs to the P4HA family. Requires Fe(2+) as cofactor. It depends on L-ascorbate as a cofactor.

It is found in the endoplasmic reticulum membrane. It localises to the golgi apparatus. The enzyme catalyses L-prolyl-[collagen] + 2-oxoglutarate + O2 = trans-4-hydroxy-L-prolyl-[collagen] + succinate + CO2. In terms of biological role, catalyzes the post-translational formation of 4-hydroxyproline in -Xaa-Pro-Gly- sequences in proline-rich peptide sequences of plant glycoproteins and other proteins. Hydroxyprolines are important constituent of many plant cell wall glycoproteins such as extensins, hydroxyproline-rich glycoproteins, lectins and arabinogalactan proteins. In Arabidopsis thaliana (Mouse-ear cress), this protein is Probable prolyl 4-hydroxylase 9.